The primary structure comprises 644 residues: MGKIIGIDLGTTNSCVAVMESGKPKVIENSEGARTTPSIVAYTEDGEILVGASAKRQAVTNPKNTLFAVKRLIGRRFNEEMVQRDIKMVPYTIIKADNNDAWIEVRGKKVAPPEVSAQVLMKMKKTAEDYLGEPVTEAVITVPAYFNDSQRQATKDAGRIAGLEVKRIINEPTAAALAFGMDKKEGDRKIAVYDLGGGTFDISIIEIAEVEGEHQFEVLATNGDTFLGGEDFDARIIEYLVDEFKKENGIDLKKDMLALQRLKDSAEKAKIELSSSQQTEVNLPYITADASGPKHLAVRITRAKLESLVEDLITRTVEPCRIAIKDAGIKISDIDDVILVGGQTRMPKVQEKVKEIFAKEPRKDVNPDEAVAVGAAIQGGVLQGAVKDVLLLDVTPLSLGIETLGGVMTKLIQKNTTIPTKANQVFSTADDNQTAVTIHVLQGEREMASGNKSLGQFNLADIPPAPRGMPQIEVTFDIDSNGILHVSAKDKATGKESKIKIQASSGLSEEEVQRMVKDAEAHAEEDHKAMELVTARNQCDAMIHSVQKTMKEHGDKLADEEKSKIESALKEAEDALKSGDKETIEAKTQALAEASHKLAEKMYSQGQGPQAGPGEEPSGQSGGTEKPVEGEVVDAEFEEVKNKK.

At Thr199 the chain carries Phosphothreonine; by autocatalysis. The tract at residues 589–644 (QALAEASHKLAEKMYSQGQGPQAGPGEEPSGQSGGTEKPVEGEVVDAEFEEVKNKK) is disordered. Over residues 604–619 (SQGQGPQAGPGEEPSG) the composition is skewed to low complexity.

The protein belongs to the heat shock protein 70 family.

Acts as a chaperone. The sequence is that of Chaperone protein DnaK from Nitrosospira multiformis (strain ATCC 25196 / NCIMB 11849 / C 71).